Here is a 216-residue protein sequence, read N- to C-terminus: MGTSLWLQPPRNSPIWQQLATTIQGLKPIFSDSENFEPHITLTSNISVNTQGQVDFVLDRAVAAAKCVPQGFQIHLSSVKYGSRFFKKVYLQVEPTPELLSLARICREDFVYMPEAMSQARNYQAMSAEERQKIDTQVGQRAAEWTRNEYDPHVSLVYSDLYPVEDADRRTIETRLEDTFGSGYDESGLGWKNGRFALVRCEGPVDEWEVLGVRDF.

H39 (proton donor/acceptor) is an active-site residue. Position 41 (T41) interacts with substrate. H153 serves as the catalytic Proton donor/acceptor. Residues S155 and Y158 each contribute to the substrate site.

It belongs to the 2H phosphoesterase superfamily. CPD1 family.

It localises to the golgi apparatus. The enzyme catalyses a nucleoside 2',3'-cyclic phosphate + H2O = a nucleoside 2'-phosphate + H(+). Its function is as follows. Involved in the metabolism of ADP-ribose 1',2'-cyclic phosphate which is produced as a consequence of tRNA splicing. The sequence is that of 2',3'-cyclic-nucleotide 3'-phosphodiesterase (CPD1) from Yarrowia lipolytica (strain CLIB 122 / E 150) (Yeast).